A 441-amino-acid chain; its full sequence is UDP-N-acetylglucosamine--peptide N-acetylglucosaminyltransferase stabilizing protein GtfB (441 aa).

It belongs to the GtfB family. In terms of assembly, forms a heterotetramer with 2 subunits each of GtfA and GtfB. Part of the accessory SecA2/SecY2 protein translocation apparatus.

Its subcellular location is the cell membrane. The protein operates within protein modification; protein glycosylation. In terms of biological role, required for polymorphic O-glycosylation of the serine-rich repeat protein (SRRP) in this bacteria. A stabilizing protein that is part of the accessory SecA2/SecY2 system specifically required to export serine-rich repeat cell wall proteins encoded in the same operon. The GtfA-GtfB complex adds GlcNAc from UDP-GlcNAc to the substrate protein, attaching the first sugar residue. Stabilizes the glycosylation activity of GtfA. Has no N-acetylglucosaminyl transferase activity on its own. This is UDP-N-acetylglucosamine--peptide N-acetylglucosaminyltransferase stabilizing protein GtfB from Limosilactobacillus reuteri subsp. suis (strain ATCC 53608 / LMG 31752 / 1063) (Lactobacillus reuteri).